Reading from the N-terminus, the 523-residue chain is GMP synthase [glutamine-hydrolyzing] (523 aa).

The 191-residue stretch at 18 to 208 folds into the Glutamine amidotransferase type-1 domain; that stretch reads KILIVDFGGQ…LYNVCGAKGD (191 aa). Residue Cys-95 is the Nucleophile of the active site. Active-site residues include His-182 and Glu-184. A GMPS ATP-PPase domain is found at 209-398; the sequence is WNMKSFLAEA…LGLPDYLVHR (190 aa). Position 236–242 (236–242) interacts with ATP; it reads SGGVDSS.

In terms of assembly, homodimer.

It carries out the reaction XMP + L-glutamine + ATP + H2O = GMP + L-glutamate + AMP + diphosphate + 2 H(+). The protein operates within purine metabolism; GMP biosynthesis; GMP from XMP (L-Gln route): step 1/1. Catalyzes the synthesis of GMP from XMP. The protein is GMP synthase [glutamine-hydrolyzing] of Treponema denticola (strain ATCC 35405 / DSM 14222 / CIP 103919 / JCM 8153 / KCTC 15104).